Reading from the N-terminus, the 364-residue chain is Guanine nucleotide-binding protein alpha-8 subunit (364 aa).

Glycine 2 carries the N-myristoyl glycine lipid modification. The S-palmitoyl cysteine moiety is linked to residue cysteine 5. A G-alpha domain is found at 38–364 (KILKLLILGP…QHTMQKVGIQ (327 aa)). The tract at residues 41–54 (KLLILGPGESGKST) is G1 motif. GTP is bound by residues 46-53 (GPGESGKS), 186-192 (LKSRVPT), 211-215 (DVGGQ), 280-283 (NKID), and alanine 336. Mg(2+) contacts are provided by serine 53 and threonine 192. The segment at 184 to 192 (DILKSRVPT) is G2 motif. The interval 207-216 (FRIFDVGGQR) is G3 motif. The interval 276 to 283 (ILFLNKID) is G4 motif. The segment at 334-339 (TCATDT) is G5 motif.

It belongs to the G-alpha family. As to quaternary structure, g proteins are composed of 3 units; alpha, beta and gamma. The alpha chain contains the guanine nucleotide binding site.

Its function is as follows. Guanine nucleotide-binding proteins (G proteins) are involved as modulators or transducers in various transmembrane signaling systems. In Caenorhabditis elegans, this protein is Guanine nucleotide-binding protein alpha-8 subunit (gpa-8).